The chain runs to 265 residues: Bidirectional sugar transporter SWEET7b (265 aa).

Topologically, residues Met1–Asn9 are extracellular. A helical transmembrane segment spans residues Met10–Phe30. Positions Met10–Lys97 constitute a MtN3/slv 1 domain. Topologically, residues Tyr31–Asp45 are cytoplasmic. A helical membrane pass occupies residues Pro46 to His66. Residues Pro67–Ser69 are Extracellular-facing. The helical transmembrane segment at Ile70–Phe90 threads the bilayer. At Phe91–Lys101 the chain is on the cytoplasmic side. The helical transmembrane segment at Met102 to Leu122 threads the bilayer. The Extracellular segment spans residues Gly123 to Ser131. The chain crosses the membrane as a helical span at residues Leu132–Ile152. Residues Ile133–Arg215 enclose the MtN3/slv 2 domain. Over Met153–Met165 the chain is Cytoplasmic. The helical transmembrane segment at Pro166–Ile186 threads the bilayer. Topologically, residues Arg187–Asp189 are extracellular. A helical membrane pass occupies residues Ile190–Tyr210. Topologically, residues Ala211 to Leu265 are cytoplasmic.

It belongs to the SWEET sugar transporter family. Forms homooligomers and/or heterooligomers.

It localises to the cell membrane. Mediates both low-affinity uptake and efflux of sugar across the plasma membrane. This chain is Bidirectional sugar transporter SWEET7b (SWEET7B), found in Oryza sativa subsp. japonica (Rice).